A 627-amino-acid chain; its full sequence is UvrABC system protein C (627 aa).

One can recognise a GIY-YIG domain in the interval 26-105; that stretch reads PEPGVYFMRD…IKQHQPYFNV (80 aa). The 36-residue stretch at 215–250 folds into the UVR domain; it reads QELIDILSEQMEKAAEALNFEVAARIRDQIAGLKSL.

It belongs to the UvrC family. Interacts with UvrB in an incision complex.

It localises to the cytoplasm. The UvrABC repair system catalyzes the recognition and processing of DNA lesions. UvrC both incises the 5' and 3' sides of the lesion. The N-terminal half is responsible for the 3' incision and the C-terminal half is responsible for the 5' incision. The chain is UvrABC system protein C from Nostoc sp. (strain PCC 7120 / SAG 25.82 / UTEX 2576).